We begin with the raw amino-acid sequence, 3298 residues long: Protocadherin-16 (3298 aa).

The N-terminal stretch at 1–42 (MQKELGIVPSCPGMKSPRPHLLLPLLLLLLLLLGAGVPGAWG) is a signal peptide. 27 Cadherin domains span residues 43-143 (QAGS…APAF), 144-255 (PQAR…APAF), 256-362 (NQSR…QPSM), 367-472 (LSAD…APAF), 474-578 (RQLY…EPQF), 579-685 (QRTF…PPQF), 686-790 (YPRE…PPIF), 791-894 (EQLQ…SPAF), 895-1000 (PAPE…APRF), 1001-1111 (NSPT…DPTF), 1112-1211 (LAVA…SPTF), 1218-1324 (AGGG…PPDL), 1333-1436 (VPVV…APAF), 1437-1546 (ARDP…APVF), 1547-1649 (ASPS…APTF), 1650-1751 (QQQE…APTF), 1752-1855 (GSAH…APAF), 1856-1960 (PVPA…APTF), 1965-2068 (LRLR…GPRF), 2069-2171 (PRAS…APRF), 2172-2277 (LRPH…RPTI), 2278-2376 (PQPW…APAF), 2377-2482 (SQSL…APSF), 2483-2602 (TLSH…PPVF), 2603-2706 (TRAS…GPAF), 2707-2813 (PLNL…DPVF), and 2814-2933 (LAPA…APDL). The Extracellular portion of the chain corresponds to 43 to 2940 (QAGSLDLQID…PDLNLLLVGA (2898 aa)). 3 N-linked (GlcNAc...) asparagine glycosylation sites follow: N217, N256, and N402. N584 is a glycosylation site (N-linked (GlcNAc...) asparagine). N-linked (GlcNAc...) asparagine glycosylation occurs at N1249. N-linked (GlcNAc...) asparagine glycosylation occurs at N1521. The N-linked (GlcNAc...) asparagine glycan is linked to N1718. The N-linked (GlcNAc...) asparagine glycan is linked to N1996. The tract at residues 2065–2094 (GPRFPRASSEATIRENAPPGTPIVSPRAVH) is disordered. N-linked (GlcNAc...) asparagine glycosylation is found at N2361, N2428, and N2569. N-linked (GlcNAc...) asparagine glycans are attached at residues N2761, N2792, and N2862. A helical membrane pass occupies residues 2941 to 2961 (VAASLGVVVVLALAALVLGLV). The Cytoplasmic segment spans residues 2962–3298 (RARSRKAEAA…EPPDDTELHI (337 aa)). Residues 2986–3040 (LQKLGREPPSPPPSEHLYHQTLPSYGGPGAGGPYPRGGSLDPSHSSGRGSAEAAE) form a disordered region. Residues 3011–3020 (GGPGAGGPYP) show a composition bias toward gly residues. S3055 carries the post-translational modification Phosphoserine. 2 disordered regions span residues 3062–3082 (ARGPDSGIQQDADGLSDTSCE) and 3233–3298 (ASHR…ELHI). 2 stretches are compositionally biased toward low complexity: residues 3244–3266 (SLSSAAMSPSFSPSLSPLAARSP) and 3276–3289 (GPSASALSAESGLE).

In terms of assembly, heterophilic interaction with FAT4; this interaction affects their respective protein levels. Expressed in fibroblasts but not in melanocytes or keratinocytes.

The protein localises to the cell membrane. Calcium-dependent cell-adhesion protein. Mediates functions in neuroprogenitor cell proliferation and differentiation. In the heart, has a critical role for proper morphogenesis of the mitral valve, acting in the regulation of cell migration involved in valve formation. This chain is Protocadherin-16 (DCHS1), found in Homo sapiens (Human).